The following is a 384-amino-acid chain: DNA replication and repair protein RecF (384 aa).

Residue 43–50 (GENGSGKT) participates in ATP binding.

It belongs to the RecF family.

It localises to the cytoplasm. In terms of biological role, the RecF protein is involved in DNA metabolism; it is required for DNA replication and normal SOS inducibility. RecF binds preferentially to single-stranded, linear DNA. It also seems to bind ATP. This chain is DNA replication and repair protein RecF, found in Brucella abortus (strain 2308).